The following is a 354-amino-acid chain: Putrescine/cadaverine-binding protein (354 aa).

The N-terminal stretch at 1 to 20 (MMKKLLLVATLMAGAAQATA) is a signal peptide.

Belongs to the bacterial solute-binding protein 1 family.

Its subcellular location is the periplasm. Its function is as follows. Binds putrescine and cadaverine. This Pseudomonas aeruginosa (strain ATCC 15692 / DSM 22644 / CIP 104116 / JCM 14847 / LMG 12228 / 1C / PRS 101 / PAO1) protein is Putrescine/cadaverine-binding protein.